Consider the following 406-residue polypeptide: Betaine--homocysteine S-methyltransferase 1 (406 aa).

A Hcy-binding domain is found at 11 to 314 (KGILERLNAG…YHIRAIAEEL (304 aa)). Lys-40, Lys-93, and Lys-98 each carry N6-succinyllysine. Residue Cys-217 coordinates Zn(2+). Lys-232 and Lys-241 each carry N6-succinyllysine. Zn(2+) is bound by residues Cys-299 and Cys-300. Residue Ser-330 is modified to Phosphoserine. Lys-340 and Lys-377 each carry N6-succinyllysine.

In terms of assembly, homotetramer. The cofactor is Zn(2+).

The protein localises to the cytoplasm. It is found in the cytosol. It localises to the nucleus. It carries out the reaction L-homocysteine + glycine betaine = N,N-dimethylglycine + L-methionine. The protein operates within amine and polyamine degradation; betaine degradation; sarcosine from betaine: step 1/2. It participates in amino-acid biosynthesis; L-methionine biosynthesis via de novo pathway; L-methionine from L-homocysteine (BhmT route): step 1/1. Involved in the regulation of homocysteine metabolism. Converts betaine and homocysteine to dimethylglycine and methionine, respectively. This reaction is also required for the irreversible oxidation of choline. The chain is Betaine--homocysteine S-methyltransferase 1 (BHMT) from Pongo abelii (Sumatran orangutan).